The primary structure comprises 609 residues: Phosphomethylpyrimidine synthase (609 aa).

Substrate is bound by residues N219, M248, Y277, H313, 333–335 (SRG), 374–377 (DGLR), and E413. Residue H417 participates in Zn(2+) binding. A substrate-binding site is contributed by Y440. Position 481 (H481) interacts with Zn(2+). Positions 561, 564, and 569 each coordinate [4Fe-4S] cluster.

Belongs to the ThiC family. [4Fe-4S] cluster is required as a cofactor.

It catalyses the reaction 5-amino-1-(5-phospho-beta-D-ribosyl)imidazole + S-adenosyl-L-methionine = 4-amino-2-methyl-5-(phosphooxymethyl)pyrimidine + CO + 5'-deoxyadenosine + formate + L-methionine + 3 H(+). It participates in cofactor biosynthesis; thiamine diphosphate biosynthesis. Its function is as follows. Catalyzes the synthesis of the hydroxymethylpyrimidine phosphate (HMP-P) moiety of thiamine from aminoimidazole ribotide (AIR) in a radical S-adenosyl-L-methionine (SAM)-dependent reaction. The chain is Phosphomethylpyrimidine synthase from Deinococcus geothermalis (strain DSM 11300 / CIP 105573 / AG-3a).